The primary structure comprises 322 residues: NADH oxidoreductase HCR (322 aa).

The 101-residue stretch at 7–107 folds into the FAD-binding FR-type domain; that stretch reads QCPWRMQVHH…SDAMGEFTCD (101 aa). The interval 111–213 is oxidoreductase; it reads EDKFLLLAAG…APYMDWVEQE (103 aa). Positions 237–322 constitute a 2Fe-2S ferredoxin-type domain; it reads SGLKFTKLQP…CHPQGDLVLA (86 aa). Residues cysteine 273, cysteine 278, cysteine 281, and cysteine 311 each contribute to the [2Fe-2S] cluster site.

It in the N-terminal section; belongs to the FAD-binding oxidoreductase type 6 family. Requires [2Fe-2S] cluster as cofactor. FAD serves as cofactor.

In terms of biological role, NADH oxidoreductase acting in concert with HCP. The polypeptide is NADH oxidoreductase HCR (hcr) (Escherichia coli (strain K12)).